The primary structure comprises 1544 residues: Protein mahjong (1544 aa).

Residues Met1–Lys110 are disordered. Low complexity predominate over residues Ala10–Ala35. A compositionally biased stretch (acidic residues) spans Ser38–Ser91. Residues Ser565 and Ser569 each carry the phosphoserine modification. The region spanning Asn912–Leu944 is the LisH domain. Disordered stretches follow at residues Thr946–Arg973 and Gly987–Asp1059. Position 955 is a phosphoserine (Ser955). Residues Ser961–Arg971 show a composition bias toward low complexity. Polar residues predominate over residues Pro1016–Pro1027. 2 consecutive short sequence motifs (DWD box) follow at residues Val1302–Gly1309 and Glu1338–Phe1345. Disordered stretches follow at residues Lys1447–Phe1475 and Leu1487–Asp1544. Acidic residues-rich tracts occupy residues Ser1451 to Ser1467 and Asn1495 to Glu1535.

It belongs to the VPRBP/DCAF1 family. Component of the CUL4-RBX1-DDB1-DCAF1 E3 ubiquitin-protein ligase complex. Interacts with l(2)gl.

The protein resides in the nucleus. Its pathway is protein modification; protein ubiquitination. Functionally, probable substrate recognition component of tsome E3 ubiquitin-protein ligase complex. Plays a key role in cell competition via its interaction with l(2)gl. This is Protein mahjong (mahj) from Drosophila melanogaster (Fruit fly).